Reading from the N-terminus, the 196-residue chain is Pyridoxine/pyridoxamine 5'-phosphate oxidase (196 aa).

Residues 44-49, 59-60, Arg-65, Lys-66, and Gln-88 contribute to the FMN site; these read RTVLLK and YT. Residue Lys-49 participates in substrate binding. Residues Tyr-106, Arg-110, and Ser-114 each contribute to the substrate site. Residues 123–124 and Trp-169 contribute to the FMN site; that span reads QS. 175–177 provides a ligand contact to substrate; it reads RLH. FMN is bound at residue Arg-179.

Belongs to the pyridoxamine 5'-phosphate oxidase family. In terms of assembly, homodimer. The cofactor is FMN.

The catalysed reaction is pyridoxamine 5'-phosphate + O2 + H2O = pyridoxal 5'-phosphate + H2O2 + NH4(+). It catalyses the reaction pyridoxine 5'-phosphate + O2 = pyridoxal 5'-phosphate + H2O2. Its pathway is cofactor metabolism; pyridoxal 5'-phosphate salvage; pyridoxal 5'-phosphate from pyridoxamine 5'-phosphate: step 1/1. It functions in the pathway cofactor metabolism; pyridoxal 5'-phosphate salvage; pyridoxal 5'-phosphate from pyridoxine 5'-phosphate: step 1/1. In terms of biological role, catalyzes the oxidation of either pyridoxine 5'-phosphate (PNP) or pyridoxamine 5'-phosphate (PMP) into pyridoxal 5'-phosphate (PLP). This chain is Pyridoxine/pyridoxamine 5'-phosphate oxidase, found in Alkalilimnicola ehrlichii (strain ATCC BAA-1101 / DSM 17681 / MLHE-1).